A 3508-amino-acid chain; its full sequence is WD repeat and FYVE domain-containing protein 3 (3508 aa).

Residues Ser1942 and Ser2277 each carry the phosphoserine modification. Disordered regions lie at residues 2279–2303 (FGLSKLTGSRRNRKESGLHKHSPSP) and 2441–2504 (SSEG…EKTD). The segment at 2284–2963 (LTGSRRNRKE…PHPPKRVRSR (680 aa)) is sufficient for translocalization to p62 bodies/ALIS. The span at 2450-2459 (EPEHGEDTIA) shows a compositional bias: basic and acidic residues. Ser2474 is modified (phosphoserine). Residues 2513–2638 (EEGEKIQHMY…IRNKVYQRFL (126 aa)) enclose the BEACH-type PH domain. Residues 2568–3508 (MHEPIIPRGA…RGAEDGPRNC (941 aa)) form an interaction with SQSTM1 region. In terms of domain architecture, BEACH spans 2665–2958 (GLLSTLVGEK…QLFKKPHPPK (294 aa)). Positions 2963–3508 (RLNGDNIGIS…RGAEDGPRNC (546 aa)) are interaction with ATG5. WD repeat units follow at residues 3059 to 3097 (SEWGQILCAVCPNPKLVITGGTSTVVCVWEMGTSKEKAK), 3107 to 3146 (GHTDTVTCATASLAYHIIVSGSRDRTCIIWDLNKLSFLTQ), 3149 to 3188 (GHRAPVSALCINELTGDIVSCAGTYIHVWSINGNPIVSVN), and 3192 to 3236 (GRSQ…VPET). The tract at residues 3254–3317 (AQIGQQAQDD…SGSDDSRRWS (64 aa)) is disordered. Over residues 3261–3272 (QDDDSSDSETEE) the composition is skewed to acidic residues. A phosphoserine mark is found at Ser3317 and Ser3321. An LIR motif is present at residues 3326–3331 (DGFIFV). The WD 5 repeat unit spans residues 3390 to 3429 (THPAEVTALGVSKDHSRILVGDSRGRVFSWSVSDQPGRSA). The segment at 3436 to 3496 (DEGGDSCSGC…VCQNCYYSLQ (61 aa)) adopts an FYVE-type zinc-finger fold. Positions 3442, 3445, 3458, 3461, 3466, 3469, 3488, and 3491 each coordinate Zn(2+).

Directly interacts with ATG5 and associates with the ATG12-ATG5-ATG16L complex. Interacts with p62/SQSTM1. Directly interacts with GABARAP, GABARAPL1 and GABARAPL2; the interaction with GABARAP is required for WDFY3 recruitment to MAP1LC3B-positive p62/SQSTM1 bodies. Weakly interacts with MAP1LC3C; this interaction is direct. Does not interact with MAP1LC3A, nor MAP1LC3B. Interacts with TRAF6. Widely expressed, with high levels in the brain (at protein level). In the brain, expressed by both neuronal and non-neuronal cells. Expressed in bones, in the periosteum, cartilage, growth plate, trabeculae of the primary spongiosa, and scattered hematopoietic cells within the medullary cavity. Tends to be expressed at lower levels in the hypertrophic zone compared to trabeculae. Expressed in osteoblasts, osteoclasts and bone-marrow derived macrophages.

The protein localises to the nucleus. It localises to the cytoplasm. It is found in the cytosol. Its subcellular location is the PML body. The protein resides in the membrane. The protein localises to the perikaryon. It localises to the cell projection. It is found in the axon. Required for selective macroautophagy (aggrephagy). Acts as an adapter protein by linking specific proteins destined for degradation to the core autophagic machinery members, such as the ATG5-ATG12-ATG16L E3-like ligase, SQSTM1 and LC3. Involved in the formation and autophagic degradation of cytoplasmic ubiquitin-containing inclusions (p62 bodies, ALIS/aggresome-like induced structures). Important for normal brain development. Essential for the formation of axonal tracts throughout the brain and spinal cord, including the formation of the major forebrain commissures. Involved in the ability of neural cells to respond to guidance cues. Required for cortical neurons to respond to the trophic effects of netrin-1/NTN1. Regulates Wnt signaling through the removal of DVL3 aggregates, likely in an autophagy-dependent manner. This process may be important for the determination of brain size during embryonic development. May regulate osteoclastogenesis by acting on the TNFSF11/RANKL - TRAF6 pathway. After cytokinetic abscission, involved in midbody remnant degradation. In vitro strongly binds to phosphatidylinositol 3-phosphate (PtdIns3P). This Mus musculus (Mouse) protein is WD repeat and FYVE domain-containing protein 3 (Wdfy3).